We begin with the raw amino-acid sequence, 647 residues long: UvrABC system protein C (647 aa).

Residues Val-16–Ile-95 form the GIY-YIG domain. The 36-residue stretch at Asp-208–Ala-243 folds into the UVR domain.

The protein belongs to the UvrC family. Interacts with UvrB in an incision complex.

Its subcellular location is the cytoplasm. The UvrABC repair system catalyzes the recognition and processing of DNA lesions. UvrC both incises the 5' and 3' sides of the lesion. The N-terminal half is responsible for the 3' incision and the C-terminal half is responsible for the 5' incision. The sequence is that of UvrABC system protein C from Mycobacterium leprae (strain Br4923).